The primary structure comprises 290 residues: Acetylglutamate kinase (290 aa).

Substrate contacts are provided by residues 60 to 61 (GG), R82, and N187.

It belongs to the acetylglutamate kinase family. ArgB subfamily.

Its subcellular location is the cytoplasm. It catalyses the reaction N-acetyl-L-glutamate + ATP = N-acetyl-L-glutamyl 5-phosphate + ADP. It functions in the pathway amino-acid biosynthesis; L-arginine biosynthesis; N(2)-acetyl-L-ornithine from L-glutamate: step 2/4. Functionally, catalyzes the ATP-dependent phosphorylation of N-acetyl-L-glutamate. The sequence is that of Acetylglutamate kinase from Marinobacter nauticus (strain ATCC 700491 / DSM 11845 / VT8) (Marinobacter aquaeolei).